Consider the following 114-residue polypeptide: Cell division protein FtsB (114 aa).

Topologically, residues 1 to 3 are cytoplasmic; that stretch reads MGK. Residues 4 to 21 traverse the membrane as a helical segment; it reads LTLLLVVLLGWLQYSLWV. Residues 22 to 114 lie on the Periplasmic side of the membrane; the sequence is GKNGVHDYMR…ASYPSVTASH (93 aa). A coiled-coil region spans residues 31–62; that stretch reads RVKQDVATQQANNAKLKSRNDQLFAEIDDLNG.

Belongs to the FtsB family. Part of a complex composed of FtsB, FtsL and FtsQ.

It is found in the cell inner membrane. In terms of biological role, essential cell division protein. May link together the upstream cell division proteins, which are predominantly cytoplasmic, with the downstream cell division proteins, which are predominantly periplasmic. This Edwardsiella ictaluri (strain 93-146) protein is Cell division protein FtsB.